Here is a 129-residue protein sequence, read N- to C-terminus: HTH-type transcriptional regulator HmrR (129 aa).

The region spanning 1–68 (MNIGEASERS…VEECRQLLAL (68 aa)) is the HTH merR-type domain. A DNA-binding region (H-T-H motif) is located at residues 4 to 23 (GEASERSGLPSKTIRYYEDI).

In terms of assembly, homodimer.

It localises to the cytoplasm. Its function is as follows. Regulates the transcription of actP. It detects cytoplasmic copper stress and activates transcription in response to increasing copper concentrations. In the absence of copper, it negatively regulates the transcription of actP. The protein is HTH-type transcriptional regulator HmrR (hmrR) of Rhizobium leguminosarum bv. viciae.